A 1104-amino-acid polypeptide reads, in one-letter code: Transient receptor potential cation channel subfamily M member 8 (1104 aa).

The tract at residues 1 to 22 is disordered; that stretch reads MSFEGARLSMRSRRNGTMGSTR. Residues 1 to 733 lie on the Cytoplasmic side of the membrane; that stretch reads MSFEGARLSM…LWYYVAFFTS (733 aa). A helical transmembrane segment spans residues 734–758; sequence PFVVFSWNVVFYIAFLLLFAYVLLM. The Extracellular segment spans residues 759-765; sequence DFHSVPH. Residues 766–789 traverse the membrane as a helical segment; the sequence is TPELILYALVFVLFCDEVRQWYMN. E782 and Q785 together coordinate Ca(2+). Over 790 to 796 the chain is Cytoplasmic; that stretch reads GVNYFTD. The chain crosses the membrane as a helical span at residues 797–817; the sequence is LWNVMDTLGLFYFIAGIVFRL. 2 residues coordinate Ca(2+): N799 and D802. Topologically, residues 818-822 are extracellular; it reads HSSNK. A helical membrane pass occupies residues 823–848; it reads SSLYSGRVIFCLDYIIFTLRLIHIFT. Topologically, residues 849–853 are cytoplasmic; the sequence is VSRNL. Residues 854 to 890 form a helical membrane-spanning segment; it reads GPKIIMLQRMLIDVFFFLFLFAVWMVAFGVARQGILR. The Extracellular portion of the chain corresponds to 891-895; the sequence is QNEQR. The pore-forming intramembrane region spans 896-912; that stretch reads WRWIFRSVIYEPYLAMF. The Extracellular portion of the chain corresponds to 913–953; sequence GQVPSDVDSTTYDFSHCTFSGNESKPLCVELDEHNLPRFPE. N-linked (GlcNAc...) (complex) asparagine glycosylation occurs at N934. The chain crosses the membrane as a helical span at residues 954-984; that stretch reads WITIPLVCIYMLSTNILLVNLLVAMFGYTVG. Residues 985-1104 lie on the Cytoplasmic side of the membrane; the sequence is IVQENNDQVW…LLKEIANNIK (120 aa). Positions 1069–1104 form a coiled coil; sequence TKANDNSEEMRHRFRQLDSKLNDLKSLLKEIANNIK.

It belongs to the transient receptor (TC 1.A.4) family. LTrpC subfamily. TRPM8 sub-subfamily. Homotetramer. Interacts (via N-terminus and C-terminus domains) with TCAF1; the interaction stimulates TRPM8 channel activity. Interacts (via N-terminus and C-terminus domains) with TCAF2; the interaction inhibits TRPM8 channel activity. In terms of processing, N-glycosylation is not essential for but facilitates cell surface expression, multimerization, association with lipid rafts and ion channel activity. As to expression, expressed in dorsal root and trigeminal ganglia. Specifically expressed in a subset of pain- and temperature-sensing neurons. Not expressed in heavily myelinated neurons. Not expressed in neurons expressing TRPA1 or TRPV1.

It is found in the cell membrane. It localises to the membrane raft. It catalyses the reaction Ca(2+)(in) = Ca(2+)(out). The catalysed reaction is Na(+)(in) = Na(+)(out). It carries out the reaction K(+)(in) = K(+)(out). Activated by cold temperatures and by both natural and synthetic cooling compounds such as menthol and icilin. Activation of the channel requires the presence of PI(4,5)P2; PI(4,5)P2 is necessary to gate the channel. Activated by intracellular Ca(2+). In terms of biological role, non-selective ion channel permeable to monovalent and divalent cations, including Na(+), K(+), and Ca(2+), with higher permeability for Ca(2+). Activated by multiple factors, such as temperature, voltage, pressure, and changes in osmolality. Activated by cool temperatures (&lt;23-28 degrees Celsius) and by chemical ligands evoking a sensation of coolness, such as menthol and icilin, therefore plays a central role in the detection of environmental cold temperatures. TRPM8 is a voltage-dependent channel; its activation by cold or chemical ligands shifts its voltage thresholds towards physiological membrane potentials, leading to the opening of the channel. In addition to its critical role in temperature sensing, regulates basal tear secretion by sensing evaporation-induced cooling and changes in osmolality. The sequence is that of Transient receptor potential cation channel subfamily M member 8 (Trpm8) from Mus musculus (Mouse).